Reading from the N-terminus, the 478-residue chain is Protein nucleotidyltransferase YdiU (478 aa).

8 residues coordinate ATP: Gly-74, Gly-76, Arg-77, Lys-97, Asp-109, Gly-110, Arg-160, and Arg-167. Asp-236 serves as the catalytic Proton acceptor. 2 residues coordinate Mg(2+): Asn-237 and Asp-246. Asp-246 is a binding site for ATP.

This sequence belongs to the SELO family. Mg(2+) is required as a cofactor. The cofactor is Mn(2+).

It carries out the reaction L-seryl-[protein] + ATP = 3-O-(5'-adenylyl)-L-seryl-[protein] + diphosphate. The enzyme catalyses L-threonyl-[protein] + ATP = 3-O-(5'-adenylyl)-L-threonyl-[protein] + diphosphate. It catalyses the reaction L-tyrosyl-[protein] + ATP = O-(5'-adenylyl)-L-tyrosyl-[protein] + diphosphate. The catalysed reaction is L-histidyl-[protein] + UTP = N(tele)-(5'-uridylyl)-L-histidyl-[protein] + diphosphate. It carries out the reaction L-seryl-[protein] + UTP = O-(5'-uridylyl)-L-seryl-[protein] + diphosphate. The enzyme catalyses L-tyrosyl-[protein] + UTP = O-(5'-uridylyl)-L-tyrosyl-[protein] + diphosphate. Nucleotidyltransferase involved in the post-translational modification of proteins. It can catalyze the addition of adenosine monophosphate (AMP) or uridine monophosphate (UMP) to a protein, resulting in modifications known as AMPylation and UMPylation. In Chromobacterium violaceum (strain ATCC 12472 / DSM 30191 / JCM 1249 / CCUG 213 / NBRC 12614 / NCIMB 9131 / NCTC 9757 / MK), this protein is Protein nucleotidyltransferase YdiU.